The chain runs to 408 residues: Mitochondrial outer membrane protein SLC25A46 (408 aa).

Disordered stretches follow at residues 1 to 23 (MHPRRPEGFDGLGYRGGGREEPC) and 52 to 80 (HWGEKTPPYGAGTPLGAAGLNEEPGLGAG). Low complexity predominate over residues 66-76 (LGAAGLNEEPG). The Solcar 1 repeat unit spans residues 86–177 (QLNRFAGFGI…GIISEFTPLP (92 aa)). A run of 6 helical transmembrane segments spans residues 93 to 113 (FGIGLASLFTENVLAHPCIVL), 157 to 177 (FIVQGITLGTEGIISEFTPLP), 189 to 209 (IGGHLLLKGLTHVIAMPFYSA), 248 to 268 (LLPLMVLIFPTALHGVLHYVI), 304 to 324 (FPELIASFAASLCADVMLYPL), and 373 to 393 (LGFYKGFGAVVVQYTLHVAVL). The stretch at 301-403 (DAYFPELIAS…QLTKIIYSTL (103 aa)) is one Solcar 2 repeat.

Belongs to the mitochondrial carrier (TC 2.A.29) family.

Its subcellular location is the mitochondrion outer membrane. In terms of biological role, transmembrane protein of the mitochondrial outer membrane that controls mitochondrial organization. May regulate the assembly of the MICOS (mitochondrial contact site and cristae organizing system) complex which is essential to the biogenesis and dynamics of mitochondrial cristae, the inwards folds of the inner mitochondrial membrane. Through its interaction with the EMC (endoplasmic reticulum membrane protein complex), could regulate mitochondrial lipid homeostasis and thereby mitochondrial fission. This is Mitochondrial outer membrane protein SLC25A46 from Gallus gallus (Chicken).